The following is a 229-amino-acid chain: MSTSSLIVAMDGPSGTGKSSVSRMLARRLGARYLDTGAMYRIATLHVLRKGVDLADPDAIADATVGLPWSIGTDPAGEQVLLDGEDVGEEIRGDAVTKAVSAVSAVPAVRELLVAAQRRLACEAGRIVVEGRDIGTVVLPDADVKIYLTASAEARAQRRNAQNLAEGRGDDFAAVLADVQRRDHLDSTRAVSPLRPADDSVLVDTSELGIDDVIGRLLLVVSERSGVGQ.

An ATP-binding site is contributed by 12–20 (GPSGTGKSS).

It belongs to the cytidylate kinase family. Type 1 subfamily.

The protein localises to the cytoplasm. It carries out the reaction CMP + ATP = CDP + ADP. It catalyses the reaction dCMP + ATP = dCDP + ADP. The polypeptide is Cytidylate kinase (Rhodococcus opacus (strain B4)).